Consider the following 515-residue polypeptide: NADH-quinone oxidoreductase subunit N (515 aa).

The next 14 helical transmembrane spans lie at 14 to 34, 40 to 60, 80 to 100, 138 to 158, 160 to 180, 195 to 215, 239 to 259, 271 to 291, 307 to 327, 333 to 353, 361 to 381, 404 to 424, 438 to 458, and 485 to 505; these read ITPILVILGAACLGVLVEAFL, WSAQVGLSLLALVAAGVALAL, APTLFLWGTLLALGLGAILLI, TEVFPLALFALGGMMVFCAAN, LLTMFIALEVLSLPLYLMCGL, YFLLGAFASAFFLYGLALLYG, LFAGLGLLVVGLLFKASVGPF, PTAVTGFMAACTKVAAFGGIL, GVLYAVAIVSMAIGVVLGLTQ, MIAYSSVAHAGFLLVGSIALT, MFYLLAYGFTTIAIFGVISLV, VAWVFTFLLLALAGIPMTSGF, GMAPLVVVALVASAVAAFFYL, and AAITLGVVVTLLLGVLPSLAL.

This sequence belongs to the complex I subunit 2 family. As to quaternary structure, NDH-1 is composed of 14 different subunits. Subunits NuoA, H, J, K, L, M, N constitute the membrane sector of the complex.

The protein localises to the cell membrane. It catalyses the reaction a quinone + NADH + 5 H(+)(in) = a quinol + NAD(+) + 4 H(+)(out). In terms of biological role, NDH-1 shuttles electrons from NADH, via FMN and iron-sulfur (Fe-S) centers, to quinones in the respiratory chain. The immediate electron acceptor for the enzyme in this species is believed to be a menaquinone. Couples the redox reaction to proton translocation (for every two electrons transferred, four hydrogen ions are translocated across the cytoplasmic membrane), and thus conserves the redox energy in a proton gradient. This chain is NADH-quinone oxidoreductase subunit N, found in Saccharopolyspora erythraea (strain ATCC 11635 / DSM 40517 / JCM 4748 / NBRC 13426 / NCIMB 8594 / NRRL 2338).